Here is a 480-residue protein sequence, read N- to C-terminus: Protein nucleotidyltransferase YdiU (480 aa).

8 residues coordinate ATP: G86, G88, R89, K109, D121, G122, R172, and R179. The Proton acceptor role is filled by D248. Positions 249 and 258 each coordinate Mg(2+). Residue D258 participates in ATP binding.

It belongs to the SELO family. Mg(2+) serves as cofactor. It depends on Mn(2+) as a cofactor.

The enzyme catalyses L-seryl-[protein] + ATP = 3-O-(5'-adenylyl)-L-seryl-[protein] + diphosphate. It carries out the reaction L-threonyl-[protein] + ATP = 3-O-(5'-adenylyl)-L-threonyl-[protein] + diphosphate. It catalyses the reaction L-tyrosyl-[protein] + ATP = O-(5'-adenylyl)-L-tyrosyl-[protein] + diphosphate. The catalysed reaction is L-histidyl-[protein] + UTP = N(tele)-(5'-uridylyl)-L-histidyl-[protein] + diphosphate. The enzyme catalyses L-seryl-[protein] + UTP = O-(5'-uridylyl)-L-seryl-[protein] + diphosphate. It carries out the reaction L-tyrosyl-[protein] + UTP = O-(5'-uridylyl)-L-tyrosyl-[protein] + diphosphate. Its function is as follows. Nucleotidyltransferase involved in the post-translational modification of proteins. It can catalyze the addition of adenosine monophosphate (AMP) or uridine monophosphate (UMP) to a protein, resulting in modifications known as AMPylation and UMPylation. The protein is Protein nucleotidyltransferase YdiU of Salmonella heidelberg (strain SL476).